The primary structure comprises 493 residues: Lysine--tRNA ligase (493 aa).

The short motif at 26 to 34 is the 'HIGH' region element; that stretch reads PSGHIHLGN. A 'KMSKS' region motif is present at residues 270–274; sequence AMKSS.

This sequence belongs to the class-I aminoacyl-tRNA synthetase family.

It is found in the cytoplasm. The catalysed reaction is tRNA(Lys) + L-lysine + ATP = L-lysyl-tRNA(Lys) + AMP + diphosphate. The polypeptide is Lysine--tRNA ligase (lysS) (Archaeoglobus fulgidus (strain ATCC 49558 / DSM 4304 / JCM 9628 / NBRC 100126 / VC-16)).